Consider the following 255-residue polypeptide: 3-dehydroquinate dehydratase (255 aa).

3-dehydroquinate contacts are provided by residues 47-49 (EWR) and arginine 83. Histidine 144 functions as the Proton donor/acceptor in the catalytic mechanism. Catalysis depends on lysine 171, which acts as the Schiff-base intermediate with substrate. 3-dehydroquinate contacts are provided by arginine 214, serine 233, and glutamine 237.

This sequence belongs to the type-I 3-dehydroquinase family. As to quaternary structure, homodimer.

The catalysed reaction is 3-dehydroquinate = 3-dehydroshikimate + H2O. The protein operates within metabolic intermediate biosynthesis; chorismate biosynthesis; chorismate from D-erythrose 4-phosphate and phosphoenolpyruvate: step 3/7. Functionally, involved in the third step of the chorismate pathway, which leads to the biosynthesis of aromatic amino acids. Catalyzes the cis-dehydration of 3-dehydroquinate (DHQ) and introduces the first double bond of the aromatic ring to yield 3-dehydroshikimate. The sequence is that of 3-dehydroquinate dehydratase from Alkaliphilus oremlandii (strain OhILAs) (Clostridium oremlandii (strain OhILAs)).